We begin with the raw amino-acid sequence, 229 residues long: Small ribosomal subunit protein uS3c (229 aa).

The 90-residue stretch at 39 to 128 folds into the KH type-2 domain; the sequence is LRDNLFKQYP…RIILTILKVQ (90 aa).

Belongs to the universal ribosomal protein uS3 family. In terms of assembly, part of the 30S ribosomal subunit.

It is found in the plastid. Its subcellular location is the chloroplast. The sequence is that of Small ribosomal subunit protein uS3c (rps3) from Tupiella akineta (Green alga).